A 430-amino-acid polypeptide reads, in one-letter code: MSFRTLSSLLPSPQNSEVSESSAFSRQSKENIKDTIILDKLRPENLPVASISDFVPLRQRDISLEAPFPSTSQINQTYVKTKAFLDSLLTKKSSLQLSSIANKDIVKREAISSVKSGTQRSVKVIEHKKDPLQPVTHRKRKVVVPSEEIQAPILHKSDDPSIKPTKEELDKWRIPSAISNWKNPNGFAISLDNRVAIESIKTDCPDNDKKDNFLLLSEALDEAEREARQRINIKQEAYKELEKEETLKKEQRLRHLAERARQDRENRRQYENEDHYVREMERNQRRRAERELERSNKMSTAEKLRRLAYQQGRDVSDKVVLNAAKATETPDLQYDSRLFKKAASSVASSSNQIFDHPLFNNSQIDNIYRPTTGSNLENEDIVDRLSNKKGRTGPVEFSAADDGKNAEQNEEDNEHAREYGLQVRKKPHTS.

Over residues 1–26 the composition is skewed to polar residues; the sequence is MSFRTLSSLLPSPQNSEVSESSAFSR. 3 disordered regions span residues 1-28, 280-299, and 370-430; these read MSFR…SRQS, MERN…NKMS, and PTTG…PHTS.

This sequence belongs to the SNW family. In terms of assembly, associated with the spliceosome.

The protein localises to the nucleus. Its function is as follows. Involved in pre-mRNA splicing. The protein is Pre-mRNA-processing protein 45 (PRP45) of Kluyveromyces lactis (strain ATCC 8585 / CBS 2359 / DSM 70799 / NBRC 1267 / NRRL Y-1140 / WM37) (Yeast).